The following is a 457-amino-acid chain: Multidrug resistance protein MdtK (457 aa).

Transmembrane regions (helical) follow at residues 11-31 (LLAL…MGFV), 53-73 (IWLP…PVIA), 93-113 (WLVA…GHII), 127-147 (AIGY…FQVL), 160-180 (GMVI…IFIY), 188-208 (LGGV…YLLM), 239-259 (IAIG…FAVV), 277-297 (ALNF…AATI), 316-336 (RTAI…TIVL), 357-377 (LMLL…GSGV), 387-407 (IFFI…YLLA), and 418-438 (PSGF…MMAL).

Belongs to the multi antimicrobial extrusion (MATE) (TC 2.A.66.1) family. MdtK subfamily.

Its subcellular location is the cell inner membrane. In terms of biological role, multidrug efflux pump that functions probably as a Na(+)/drug antiporter. In Edwardsiella ictaluri (strain 93-146), this protein is Multidrug resistance protein MdtK.